The following is a 214-amino-acid chain: uncharacterized protein (214 aa).

4 helical membrane-spanning segments follow: residues 10–30 (IPPLAVYLLVSGVVGVESLGI), 55–75 (IGVGVVAVIGAAVGDSIGYAI), 147–167 (VSGAICWAGGTTALVYFAGMA), and 174–194 (RFSWIALIITVVVGIIAAILL).

It belongs to the DedA family.

It is found in the cell membrane. This is an uncharacterized protein from Mycobacterium leprae (strain TN).